Consider the following 957-residue polypeptide: Glycine dehydrogenase (decarboxylating) (957 aa).

Residue Lys-708 is modified to N6-(pyridoxal phosphate)lysine.

The protein belongs to the GcvP family. The glycine cleavage system is composed of four proteins: P, T, L and H. It depends on pyridoxal 5'-phosphate as a cofactor.

The enzyme catalyses N(6)-[(R)-lipoyl]-L-lysyl-[glycine-cleavage complex H protein] + glycine + H(+) = N(6)-[(R)-S(8)-aminomethyldihydrolipoyl]-L-lysyl-[glycine-cleavage complex H protein] + CO2. Its function is as follows. The glycine cleavage system catalyzes the degradation of glycine. The P protein binds the alpha-amino group of glycine through its pyridoxal phosphate cofactor; CO(2) is released and the remaining methylamine moiety is then transferred to the lipoamide cofactor of the H protein. In Klebsiella pneumoniae (strain 342), this protein is Glycine dehydrogenase (decarboxylating).